The primary structure comprises 169 residues: Peptide deformylase (169 aa).

Fe cation contacts are provided by cysteine 91 and histidine 133. Glutamate 134 is a catalytic residue. Histidine 137 contributes to the Fe cation binding site.

The protein belongs to the polypeptide deformylase family. Fe(2+) serves as cofactor.

The catalysed reaction is N-terminal N-formyl-L-methionyl-[peptide] + H2O = N-terminal L-methionyl-[peptide] + formate. Removes the formyl group from the N-terminal Met of newly synthesized proteins. Requires at least a dipeptide for an efficient rate of reaction. N-terminal L-methionine is a prerequisite for activity but the enzyme has broad specificity at other positions. This chain is Peptide deformylase, found in Citrobacter koseri (strain ATCC BAA-895 / CDC 4225-83 / SGSC4696).